The primary structure comprises 101 residues: Protein Tat (101 aa).

The tract at residues 1–24 (MDPVDPKLEPWNHPGSQPTTPCNK) is interaction with human CREBBP. The tract at residues 1–48 (MDPVDPKLEPWNHPGSQPTTPCNKCYCKVCCWHCQVCFLNKGLGISYG) is transactivation. 3 residues coordinate Zn(2+): Cys-22, Cys-25, and Cys-27. A cysteine-rich region spans residues 22–37 (CNKCYCKVCCWHCQVC). An N6-acetyllysine; by host PCAF modification is found at Lys-28. Zn(2+) contacts are provided by Cys-30, His-33, Cys-34, and Cys-37. The tract at residues 38 to 48 (FLNKGLGISYG) is core. The interval 48-101 (GRKKRRPRRGTPQGSKDHQNPVPKQPLPITSGNPTGSEKPKKEVASKTETDPLD) is disordered. The Nuclear localization signal, RNA-binding (TAR), and protein transduction motif lies at 49-57 (RKKRRPRRG). The tract at residues 49-86 (RKKRRPRRGTPQGSKDHQNPVPKQPLPITSGNPTGSEK) is interaction with the host capping enzyme RNGTT. N6-acetyllysine; by host EP300 and GCN5L2 is present on residues Lys-50 and Lys-51. Asymmetric dimethylarginine; by host PRMT6 occurs at positions 52 and 53. Lys-71 participates in a covalent cross-link: Glycyl lysine isopeptide (Lys-Gly) (interchain with G-Cter in ubiquitin). Basic and acidic residues predominate over residues 85-101 (EKPKKEVASKTETDPLD).

This sequence belongs to the lentiviruses Tat family. As to quaternary structure, interacts with host CCNT1. Associates with the P-TEFb complex composed at least of Tat, P-TEFb (CDK9 and CCNT1), TAR RNA, RNA Pol II. Recruits the HATs CREBBP, TAF1/TFIID, EP300, PCAF and GCN5L2. Interacts with host KAT5/Tip60; this interaction targets the latter to degradation. Interacts with the host deacetylase SIRT1. Interacts with host capping enzyme RNGTT; this interaction stimulates RNGTT. Binds to host KDR, and to the host integrins ITGAV/ITGB3 and ITGA5/ITGB1. Interacts with host KPNB1/importin beta-1 without previous binding to KPNA1/importin alpha-1. Interacts with EIF2AK2. Interacts with host nucleosome assembly protein NAP1L1; this interaction may be required for the transport of Tat within the nucleus, since the two proteins interact at the nuclear rim. Interacts with host C1QBP/SF2P32; this interaction involves lysine-acetylated Tat. Interacts with the host chemokine receptors CCR2, CCR3 and CXCR4. Interacts with host DPP4/CD26; this interaction may trigger an anti-proliferative effect. Interacts with host LDLR. Interacts with the host extracellular matrix metalloproteinase MMP1. Interacts with host PRMT6; this interaction mediates Tat's methylation. Interacts with, and is ubiquitinated by MDM2/Hdm2. Interacts with host PSMC3 and HTATIP2. Interacts with STAB1; this interaction may overcome SATB1-mediated repression of IL2 and IL2RA (interleukin) in T cells by binding to the same domain than HDAC1. Interacts (when acetylated) with human CDK13, thereby increasing HIV-1 mRNA splicing and promoting the production of the doubly spliced HIV-1 protein Nef. Interacts with host TBP; this interaction modulates the activity of transcriptional pre-initiation complex. Interacts with host RELA. Interacts with host PLSCR1; this interaction negatively regulates Tat transactivation activity by altering its subcellular distribution. In terms of processing, asymmetrical arginine methylation by host PRMT6 seems to diminish the transactivation capacity of Tat and affects the interaction with host CCNT1. Post-translationally, acetylation by EP300, CREBBP, GCN5L2/GCN5 and PCAF regulates the transactivation activity of Tat. EP300-mediated acetylation of Lys-50 promotes dissociation of Tat from the TAR RNA through the competitive binding to PCAF's bromodomain. In addition, the non-acetylated Tat's N-terminus can also interact with PCAF. PCAF-mediated acetylation of Lys-28 enhances Tat's binding to CCNT1. Lys-50 is deacetylated by SIRT1. Polyubiquitination by host MDM2 does not target Tat to degradation, but activates its transactivation function and fosters interaction with CCNT1 and TAR RNA. In terms of processing, phosphorylated by EIF2AK2 on serine and threonine residues adjacent to the basic region important for TAR RNA binding and function. Phosphorylation of Tat by EIF2AK2 is dependent on the prior activation of EIF2AK2 by dsRNA.

The protein localises to the host nucleus. It is found in the host nucleolus. Its subcellular location is the host cytoplasm. It localises to the secreted. Transcriptional activator that increases RNA Pol II processivity, thereby increasing the level of full-length viral transcripts. Recognizes a hairpin structure at the 5'-LTR of the nascent viral mRNAs referred to as the transactivation responsive RNA element (TAR) and recruits the cyclin T1-CDK9 complex (P-TEFb complex) that will in turn hyperphosphorylate the RNA polymerase II to allow efficient elongation. The CDK9 component of P-TEFb and other Tat-activated kinases hyperphosphorylate the C-terminus of RNA Pol II that becomes stabilized and much more processive. Other factors such as HTATSF1/Tat-SF1, SUPT5H/SPT5, and HTATIP2 are also important for Tat's function. Besides its effect on RNA Pol II processivity, Tat induces chromatin remodeling of proviral genes by recruiting the histone acetyltransferases (HATs) CREBBP, EP300 and PCAF to the chromatin. This also contributes to the increase in proviral transcription rate, especially when the provirus integrates in transcriptionally silent region of the host genome. To ensure maximal activation of the LTR, Tat mediates nuclear translocation of NF-kappa-B by interacting with host RELA. Through its interaction with host TBP, Tat may also modulate transcription initiation. Tat can reactivate a latently infected cell by penetrating in it and transactivating its LTR promoter. In the cytoplasm, Tat is thought to act as a translational activator of HIV-1 mRNAs. In terms of biological role, extracellular circulating Tat can be endocytosed by surrounding uninfected cells via the binding to several surface receptors such as CD26, CXCR4, heparan sulfate proteoglycans (HSPG) or LDLR. Neurons are rarely infected, but they internalize Tat via their LDLR. Through its interaction with nuclear HATs, Tat is potentially able to control the acetylation-dependent cellular gene expression. Modulates the expression of many cellular genes involved in cell survival, proliferation or in coding for cytokines or cytokine receptors. Tat plays a role in T-cell and neurons apoptosis. Tat induced neurotoxicity and apoptosis probably contribute to neuroAIDS. Circulating Tat also acts as a chemokine-like and/or growth factor-like molecule that binds to specific receptors on the surface of the cells, affecting many cellular pathways. In the vascular system, Tat binds to ITGAV/ITGB3 and ITGA5/ITGB1 integrins dimers at the surface of endothelial cells and competes with bFGF for heparin-binding sites, leading to an excess of soluble bFGF. The chain is Protein Tat from Homo sapiens (Human).